The sequence spans 201 residues: MAEPGFFNAMLIGALIFGYVLGSIPFGLILTRLAGLGDVRAIGSGNIGATNVLRTGNKKLAAATLILDALKGTAAALIAAHFGQNAAIAAGFGAFIGHLFPVWIGFKGGKGVATYLGVLIGLAWAGALVFAAAWIVTALLTRYSSLSALVASLVVPIALYSRGNQALAALFAIMTVIVFIKHRANIRRLLNGTESKIGAKG.

5 helical membrane-spanning segments follow: residues 10 to 30 (MLIG…GLIL), 60 to 80 (LAAA…LIAA), 86 to 106 (AAIA…WIGF), 116 to 136 (LGVL…AWIV), and 166 to 186 (ALAA…RANI).

Belongs to the PlsY family. As to quaternary structure, probably interacts with PlsX.

The protein resides in the cell inner membrane. It carries out the reaction an acyl phosphate + sn-glycerol 3-phosphate = a 1-acyl-sn-glycero-3-phosphate + phosphate. The protein operates within lipid metabolism; phospholipid metabolism. Its function is as follows. Catalyzes the transfer of an acyl group from acyl-phosphate (acyl-PO(4)) to glycerol-3-phosphate (G3P) to form lysophosphatidic acid (LPA). This enzyme utilizes acyl-phosphate as fatty acyl donor, but not acyl-CoA or acyl-ACP. The protein is Glycerol-3-phosphate acyltransferase of Brucella canis (strain ATCC 23365 / NCTC 10854 / RM-666).